A 547-amino-acid chain; its full sequence is Threonine synthase (547 aa).

The residue at position 117 (Lys117) is an N6-(pyridoxal phosphate)lysine. Pyridoxal 5'-phosphate-binding residues include Gly272, Asn273, Phe274, Asp276, and Thr471.

It belongs to the threonine synthase family. Pyridoxal 5'-phosphate serves as cofactor.

It catalyses the reaction O-phospho-L-homoserine + H2O = L-threonine + phosphate. It participates in amino-acid biosynthesis; L-threonine biosynthesis; L-threonine from L-aspartate: step 5/5. In terms of biological role, catalyzes the gamma-elimination of phosphate from L-phosphohomoserine and the beta-addition of water to produce L-threonine. The polypeptide is Threonine synthase (Cryptococcus neoformans var. grubii serotype A (strain H99 / ATCC 208821 / CBS 10515 / FGSC 9487) (Filobasidiella neoformans var. grubii)).